A 467-amino-acid polypeptide reads, in one-letter code: Glycosyl hydrolase family 109 protein (467 aa).

Positions 1–31 form a signal peptide, tat-type signal; sequence MKNFNRRAFLKAAGATTAGLVTSGLILPASA. NAD(+) is bound by residues 66–67, D88, 137–140, 157–158, and N186; these read QR, WQWH, and EV. Residues Y215, R234, 246–249, and Y328 contribute to the substrate site; that span reads YPTH. NAD(+) is bound at residue Y246.

The protein belongs to the Gfo/Idh/MocA family. Glycosyl hydrolase 109 subfamily. NAD(+) is required as a cofactor. In terms of processing, predicted to be exported by the Tat system. The position of the signal peptide cleavage has not been experimentally proven.

Functionally, glycosidase. The sequence is that of Glycosyl hydrolase family 109 protein from Shewanella woodyi (strain ATCC 51908 / MS32).